The primary structure comprises 80 residues: Metallothionein-like protein 1 (80 aa).

The protein belongs to the metallothionein superfamily. Type 15 family.

Metallothioneins have a high content of cysteine residues that bind various heavy metals. This Coffea arabica (Arabian coffee) protein is Metallothionein-like protein 1 (METAL1).